Reading from the N-terminus, the 284-residue chain is uncharacterized protein (284 aa).

The signal sequence occupies residues 1–23 (MKRGCAIAVMICGLITSVSAASA).

It belongs to the surface antigen msp4 family.

This is an uncharacterized protein from Brucella melitensis biotype 1 (strain ATCC 23456 / CCUG 17765 / NCTC 10094 / 16M).